The chain runs to 675 residues: Putative acyl-coenzyme A oxidase 3.2, peroxisomal (675 aa).

A peroxisome-targeting transit peptide spans 1-34 (MSENVELRRAHILANHILRSPRPSSNPSLTPEVC). Residue 442 to 457 (AVGGQGLKTENRVGHL) participates in FAD binding.

The protein belongs to the acyl-CoA oxidase family. FAD is required as a cofactor.

It is found in the peroxisome. The enzyme catalyses a 2,3-saturated acyl-CoA + O2 = a (2E)-enoyl-CoA + H2O2. Its function is as follows. Catalyzes the desaturation of acyl-CoAs to 2-trans-enoyl-CoAs. The polypeptide is Putative acyl-coenzyme A oxidase 3.2, peroxisomal (ACX3.2) (Arabidopsis thaliana (Mouse-ear cress)).